The sequence spans 1391 residues: Periaxin (1391 aa).

At Ser-7 the chain carries Phosphoserine. The region spanning 16–99 (LVEIIVETEA…YKVSFCLKRT (84 aa)) is the PDZ domain. The short motif at 70 to 84 (VFFENFKYEDALRLL) is the Nuclear export signal element. A Nuclear localization signal motif is present at residues 118-196 (KGPRAKVAKL…RLQLPRLRVR (79 aa)). The residue at position 243 (Ser-243) is a Phosphoserine. Repeat copies occupy residues 432–436 (GPEVK), 440–444 (GPEVK), 448–452 (VPEVK), 456–460 (VPEAA), 464–468 (VQLPE), 469–473 (VQLPK), 474–478 (MSDMK), 482–486 (IPEMV), 487–491 (VPDVR), 495–499 (VQLPK), 500–504 (VPEMK), and 508–512 (MKLPK). The segment at 432 to 719 (GPEVKAPTGP…MQVSQVPEVQ (288 aa)) is 45 X 5 AA approximate tandem repeats of [LVMGIED]-[PQSKHARMI]-[EDKLVTR]-[LIVMAP]-[AQKHRPEVSD]; that may have a tripeptide spacer of [LVIDEA]-[PMSVI]-[KEATDQ]. The 13; approximate repeat unit spans residues 513 to 517 (WPEMA). Repeat copies occupy residues 521 to 525 (VHLPD), 526 to 530 (VQLPK), 534 to 538 (MKLPK), 539 to 543 (VPEMA), 547 to 551 (VHLPD), 552 to 556 (VQLPK), 560 to 564 (MKLPE), 565 to 569 (MKLPK), 573 to 577 (MAVPD), 578 to 582 (VRLPE), 583 to 587 (VQLPK), 591 to 595 (VKLPK), 596 to 600 (MPEMA), 601 to 605 (VPDVH), 609 to 613 (LQLPK), 614 to 618 (MSEVK), 619 to 623 (LPKMP), 627 to 631 (VPDVR), 632 to 636 (LPEVQ), 637 to 641 (LPKVS), 645 to 649 (LPKMP), 650 to 654 (EMTMP), 655 to 659 (DIRLP), 663 to 667 (LPKVP), 671 to 675 (LPEMK), 676 to 680 (LPEIK), 684 to 688 (VPDMA), 689 to 693 (VPDVP), 697 to 701 (LQLPK), 702 to 706 (VSDIR), 707 to 711 (LPEMQ), and 715 to 719 (VPEVQ). Phosphoserine occurs at positions 848, 979, 1028, 1279, 1283, 1285, 1293, 1331, and 1337. The disordered stretch occupies residues 1267–1366 (LPRVGFSQSE…DREEGGFRVR (100 aa)). Low complexity predominate over residues 1275–1285 (SESVSGEGSPS). Residues 1354 to 1363 (GSRDREEGGF) show a composition bias toward basic and acidic residues. Position 1369 is a phosphoserine (Ser-1369).

Belongs to the periaxin family. As to quaternary structure, homodimer (via PDZ domain). Interacts with SCN10A. Found in a complex with SCN10A. Interacts with DRP2. Identified in a dystroglycan complex that contains at least PRX, DRP2, UTRN, DMD and DAG1. Detected in a complex composed of at least EZR, AHNAK, PPL and PRX. Identified in a complex with EZR, AHNAK, BFSP1, BFSP2, ANK2, PLEC, VIM and spectrin. As to expression, detected in myelinating Schwann cells in intramuscular nerves in triangularis sterni. Detected in sciatic nerve. Detected in eye lens fiber cells. Isoform 1 is detected in myelinating Schwann cells in sciatic nerve. Isoform 2 is detected in myelinating Schwann cells in sciatic nerve (at protein level). Detected in sciatic nerve.

Its subcellular location is the cell membrane. It localises to the cell junction. The protein localises to the nucleus. It is found in the cytoplasm. Functionally, scaffolding protein that functions as part of a dystroglycan complex in Schwann cells, and as part of EZR and AHNAK-containing complexes in eye lens fiber cells. Required for the maintenance of the peripheral myelin sheath that is essential for normal transmission of nerve impulses and normal perception of sensory stimuli. Required for normal transport of MBP mRNA from the perinuclear to the paranodal regions. Required for normal remyelination after nerve injury. Required for normal elongation of Schwann cells and normal length of the internodes between the nodes of Ranvier. The demyelinated nodes of Ranvier permit saltatory transmission of nerve impulses; shorter internodes cause slower transmission of nerve impulses. Required for the formation of appositions between the abaxonal surface of the myelin sheath and the Schwann cell plasma membrane; the Schwann cell cytoplasm is restricted to regions between these appositions. Required for the formation of Cajal bands and of Schmidt-Lanterman incisures that correspond to short, cytoplasm-filled regions on myelinated nerves. Recruits DRP2 to the Schwann cell plasma membrane. Required for normal protein composition of the eye lens fiber cell plasma membrane and normal eye lens fiber cell morphology. The protein is Periaxin (Prx) of Mus musculus (Mouse).